A 156-amino-acid chain; its full sequence is 6,7-dimethyl-8-ribityllumazine synthase (156 aa).

5-amino-6-(D-ribitylamino)uracil is bound by residues Phe-22, 57-59, and 81-83; these read AYE and TVI. 86–87 contacts (2S)-2-hydroxy-3-oxobutyl phosphate; that stretch reads GT. His-89 serves as the catalytic Proton donor. Phe-114 provides a ligand contact to 5-amino-6-(D-ribitylamino)uracil. Arg-128 contributes to the (2S)-2-hydroxy-3-oxobutyl phosphate binding site.

This sequence belongs to the DMRL synthase family. Forms an icosahedral capsid composed of 60 subunits, arranged as a dodecamer of pentamers.

The catalysed reaction is (2S)-2-hydroxy-3-oxobutyl phosphate + 5-amino-6-(D-ribitylamino)uracil = 6,7-dimethyl-8-(1-D-ribityl)lumazine + phosphate + 2 H2O + H(+). The protein operates within cofactor biosynthesis; riboflavin biosynthesis; riboflavin from 2-hydroxy-3-oxobutyl phosphate and 5-amino-6-(D-ribitylamino)uracil: step 1/2. Functionally, catalyzes the formation of 6,7-dimethyl-8-ribityllumazine by condensation of 5-amino-6-(D-ribitylamino)uracil with 3,4-dihydroxy-2-butanone 4-phosphate. This is the penultimate step in the biosynthesis of riboflavin. In Citrobacter koseri (strain ATCC BAA-895 / CDC 4225-83 / SGSC4696), this protein is 6,7-dimethyl-8-ribityllumazine synthase.